A 433-amino-acid chain; its full sequence is Pyrimidine-nucleoside phosphorylase (433 aa).

81-83 provides a ligand contact to phosphate; it reads KHS. K(+)-binding residues include glycine 88 and threonine 90. Phosphate contacts are provided by residues threonine 92, 108–110, and threonine 120; that span reads KMS. Substrate is bound by residues arginine 168 and lysine 187. Leucine 243, alanine 246, and glutamate 255 together coordinate K(+).

The protein belongs to the thymidine/pyrimidine-nucleoside phosphorylase family. As to quaternary structure, homodimer. K(+) is required as a cofactor.

The catalysed reaction is uridine + phosphate = alpha-D-ribose 1-phosphate + uracil. It carries out the reaction thymidine + phosphate = 2-deoxy-alpha-D-ribose 1-phosphate + thymine. The enzyme catalyses 2'-deoxyuridine + phosphate = 2-deoxy-alpha-D-ribose 1-phosphate + uracil. In terms of biological role, catalyzes phosphorolysis of the pyrimidine nucleosides uridine, thymidine and 2'-deoxyuridine with the formation of the corresponding pyrimidine base and ribose-1-phosphate. This is Pyrimidine-nucleoside phosphorylase (pdp) from Staphylococcus epidermidis (strain ATCC 12228 / FDA PCI 1200).